A 260-amino-acid polypeptide reads, in one-letter code: Transmembrane protein 70, mitochondrial (260 aa).

The N-terminal 81 residues, 1–81 (MLFLALGSPW…PVYWEGYVRF (81 aa)), are a transit peptide targeting the mitochondrion. The Mitochondrial matrix segment spans residues 82–102 (LNTPSDKSEDGRLIYTGNMAR). A helical transmembrane segment spans residues 103-123 (AVFGVKCFSYSTSLIGLTFLP). The Mitochondrial intermembrane segment spans residues 124 to 141 (YIFTQNNAISESVPLPIQ). Residues 142–162 (IIFYGIMGSFTVITPVLLHFI) traverse the membrane as a helical segment. Over 163–260 (TKGYVIRLYH…SEEKRHKDDK (98 aa)) the chain is Mitochondrial matrix.

The protein belongs to the TMEM70 family. In terms of assembly, homooligomer. Interacts (homooligomer form) with ATP5MC1; this interaction facilitates the oligomer formation of subunit c/ATP5MC1 (c-ring) and the c-ring membrane insertion and also protects ATP5MC1 against intramitochondrial proteolysis. Interacts with the core subunits TMEM126B, NDUFAF1, ECSIT and ACAD9 of the MCIA complex. Interacts with ATP5MC3, TMEM242 and TIMMDC1. As to expression, lower expressed in the heart than in the liver (at protein level).

It is found in the mitochondrion inner membrane. Scaffold protein that participates in the c-ring assembly of mitochondrial ATP synthase (F(1)F(0) ATP synthase or complex V) by facilitating the membrane insertion and oligomer formation of the subunit c/ATP5MC1 through its interaction. Therefore, participates in the early stage of mitochondrial ATP synthase biogenesis and also protects subunit c/ATP5MC1 against intramitochondrial proteolysis. In addition, binds the mitochondrial proton-transporting ATP synthase complexes I and may play a role in the stability of its membrane-bound subassemblies. In Homo sapiens (Human), this protein is Transmembrane protein 70, mitochondrial.